The primary structure comprises 485 residues: Elongation factor TuB, chloroplastic (485 aa).

Residues 1 to 76 (MASISAASAT…TTHPRRFTVR (76 aa)) constitute a chloroplast transit peptide. The 205-residue stretch at 86–290 (KPHVNIGTIG…NVDEYIPIPQ (205 aa)) folds into the tr-type G domain. Positions 95–102 (GHVDHGKT) are G1. GTP is bound at residue 95–102 (GHVDHGKT). Residues 136 to 140 (GITIN) are G2. The interval 157–160 (DCPG) is G3. Residues 157–161 (DCPGH) and 212–215 (NKQD) each bind GTP. The segment at 212 to 215 (NKQD) is G4. Positions 250–252 (SAL) are G5.

Belongs to the TRAFAC class translation factor GTPase superfamily. Classic translation factor GTPase family. EF-Tu/EF-1A subfamily.

It is found in the plastid. The protein localises to the chloroplast. Its function is as follows. This protein promotes the GTP-dependent binding of aminoacyl-tRNA to the A-site of ribosomes during protein biosynthesis. The polypeptide is Elongation factor TuB, chloroplastic (TUFB) (Nicotiana sylvestris (Wood tobacco)).